We begin with the raw amino-acid sequence, 557 residues long: MILLSIEGMTCPSCVAHVKEALDAIEGVNKVEISYENARATITTNGGVSVTVLIGAIEALGYIAKESTGTAKEITSPNDCCDNENASNTESNQTQHVAIIGTGSGAFACAIKAAEGGAKVTLIEGADVIGGCCVNVGCVPSKILIRAAQLAQQQRNNPFTGLENHAPQLSRALLTQQQTARVEELRAAKYQNILETNPALSLLKGWAQFKNANTLIVRKNDGTEQAVHADKILIATGSTPTIPPIDGLTETPYWTSTEALFAQELPQHLVVIGSSVVALEIAQAYRRLGSEVTILARHTLLYREDPLLGEKLTGCFEKEGIRVLNSTQATKVTHDGSQFTLETNAGDLRCDRLLVSTGRHANTCQLNLGAVGVTTNKKGEIVVNERMETNVPGIYAAGDCCNMPQFVYVAAAAGSRSGINMTGGYAKLDLSTMPAVIFTDPQVATVGLTEEQANAQDIETDSRVLEMENVPRALANFETDGFIKLVTEKATGRLIGAQILAHEGGELIQSAALAIRNRMTVTELADQLFPYLTMVEGLKLCAQTFNKDVKELSCCAG.

Positions 1–65 (MILLSIEGMT…AIEALGYIAK (65 aa)) constitute an HMA domain. Residues cysteine 11 and cysteine 14 each contribute to the a metal cation site. FAD contacts are provided by alanine 106 and alanine 126. Residues cysteine 133 and cysteine 138 are joined by a disulfide bond. The FAD site is built by lysine 142, alanine 207, aspartate 399, and valine 407. Residues cysteine 554 and cysteine 555 each contribute to the Hg(2+) site.

The protein belongs to the class-I pyridine nucleotide-disulfide oxidoreductase family. Homodimer. FAD serves as cofactor.

It catalyses the reaction Hg + NADP(+) + H(+) = Hg(2+) + NADPH. In terms of biological role, resistance to Hg(2+) in bacteria appears to be governed by a specialized system which includes mercuric reductase. MerA protein is responsible for volatilizing mercury as Hg(0). The protein is Mercuric reductase (merA) of Shewanella putrefaciens (Pseudomonas putrefaciens).